We begin with the raw amino-acid sequence, 185 residues long: Ribosome-recycling factor (185 aa).

The protein belongs to the RRF family.

The protein resides in the cytoplasm. Responsible for the release of ribosomes from messenger RNA at the termination of protein biosynthesis. May increase the efficiency of translation by recycling ribosomes from one round of translation to another. The protein is Ribosome-recycling factor of Roseiflexus sp. (strain RS-1).